A 386-amino-acid chain; its full sequence is Antilisterial bacteriocin subtilosin biosynthesis protein AlbE (386 aa).

Involved in the production of the bacteriocin subtilosin. This Bacillus subtilis (strain 168) protein is Antilisterial bacteriocin subtilosin biosynthesis protein AlbE (albE).